The primary structure comprises 418 residues: MERLLIRGGNPLRGDIRISGAKNAALPVMAATLLADGPTTVGNIPHLHDVTTTMELLGRMGVELTVHEGMEVEVNTATIHSFRAPYELVKTMRASILVLGPLLARFGQAEVSLPGGCAIGSRPVNIHVDGLRAMGAEIEVRDGYIKGRADRLQGAHIRMDVSTVTGTENLMMAAALARGTTVLENAAREPEVINLADCINAMGGHVQGAGTSTITIEGVDTLRGVHHRVLPDRIETGTYLVAAAMTGGEVRLKDTAPELVESVLGKLRESGAEVSAGRDWVTLRMEGRPRAVDLETAPYPGFPTDMQAQFCALNAISTGEGTVTETVFENRFMHCLEMQRMGADIQIEGARARIRGVEKLTAAPVIATDLRASASLVLAGLVAEGETRVDRIYHIDRGYECIEEKLAQLGADIQRVPD.

22-23 provides a ligand contact to phosphoenolpyruvate; that stretch reads KN. Position 93 (R93) interacts with UDP-N-acetyl-alpha-D-glucosamine. The active-site Proton donor is C117. C117 carries the post-translational modification 2-(S-cysteinyl)pyruvic acid O-phosphothioketal. Residues D305 and V327 each coordinate UDP-N-acetyl-alpha-D-glucosamine.

This sequence belongs to the EPSP synthase family. MurA subfamily.

The protein localises to the cytoplasm. The enzyme catalyses phosphoenolpyruvate + UDP-N-acetyl-alpha-D-glucosamine = UDP-N-acetyl-3-O-(1-carboxyvinyl)-alpha-D-glucosamine + phosphate. It functions in the pathway cell wall biogenesis; peptidoglycan biosynthesis. Its function is as follows. Cell wall formation. Adds enolpyruvyl to UDP-N-acetylglucosamine. The chain is UDP-N-acetylglucosamine 1-carboxyvinyltransferase from Halorhodospira halophila (strain DSM 244 / SL1) (Ectothiorhodospira halophila (strain DSM 244 / SL1)).